The following is a 742-amino-acid chain: Phosphoribosylformylglycinamidine synthase subunit PurL (742 aa).

The active site involves H54. Y57 and K96 together coordinate ATP. Mg(2+) is bound at residue E98. Substrate is bound by residues 99 to 102 (SHNH) and R121. The active-site Proton acceptor is the H100. Residue D122 coordinates Mg(2+). Residue Q245 participates in substrate binding. D273 is a binding site for Mg(2+). 317 to 319 (ESQ) serves as a coordination point for substrate. 2 residues coordinate ATP: D500 and G537. A Mg(2+)-binding site is contributed by N538. Position 540 (S540) interacts with substrate.

The protein belongs to the FGAMS family. As to quaternary structure, monomer. Part of the FGAM synthase complex composed of 1 PurL, 1 PurQ and 2 PurS subunits.

The protein localises to the cytoplasm. It carries out the reaction N(2)-formyl-N(1)-(5-phospho-beta-D-ribosyl)glycinamide + L-glutamine + ATP + H2O = 2-formamido-N(1)-(5-O-phospho-beta-D-ribosyl)acetamidine + L-glutamate + ADP + phosphate + H(+). Its pathway is purine metabolism; IMP biosynthesis via de novo pathway; 5-amino-1-(5-phospho-D-ribosyl)imidazole from N(2)-formyl-N(1)-(5-phospho-D-ribosyl)glycinamide: step 1/2. Part of the phosphoribosylformylglycinamidine synthase complex involved in the purines biosynthetic pathway. Catalyzes the ATP-dependent conversion of formylglycinamide ribonucleotide (FGAR) and glutamine to yield formylglycinamidine ribonucleotide (FGAM) and glutamate. The FGAM synthase complex is composed of three subunits. PurQ produces an ammonia molecule by converting glutamine to glutamate. PurL transfers the ammonia molecule to FGAR to form FGAM in an ATP-dependent manner. PurS interacts with PurQ and PurL and is thought to assist in the transfer of the ammonia molecule from PurQ to PurL. The sequence is that of Phosphoribosylformylglycinamidine synthase subunit PurL from Oceanobacillus iheyensis (strain DSM 14371 / CIP 107618 / JCM 11309 / KCTC 3954 / HTE831).